A 541-amino-acid chain; its full sequence is Long-chain-fatty-acid--CoA ligase (541 aa).

Position 184 (Thr184) interacts with Mg(2+). The ATP site is built by Val231 and Trp234. Gly302, Gln322, Gly323, and Thr327 together coordinate tetradecanoyl-AMP. The ATP site is built by Gly323 and Thr327. A Mg(2+)-binding site is contributed by Glu328. The ATP site is built by Asp418, Lys435, Lys439, and Trp444. Positions 418, 435, and 439 each coordinate tetradecanoyl-AMP.

It belongs to the ATP-dependent AMP-binding enzyme family. In terms of assembly, forms a domain swapped homodimer. It depends on Mg(2+) as a cofactor.

It carries out the reaction a long-chain fatty acid + ATP + CoA = a long-chain fatty acyl-CoA + AMP + diphosphate. It catalyses the reaction tetradecanoate + ATP + CoA = tetradecanoyl-CoA + AMP + diphosphate. The catalysed reaction is hexadecanoate + ATP + CoA = hexadecanoyl-CoA + AMP + diphosphate. It functions in the pathway lipid metabolism; fatty acid metabolism. Functionally, catalyzes the esterification of a number of long chain fatty acids with CoA, resulting in the formation of long-chain fatty acyl-CoA. Myristate (C14) is the most efficiently processed fatty acid, followed by palmitate (C16). Also catalyzes the esterification of stearate (C18) and laurate (C12), but at lower efficiency. Does not catalyze the esterification of the unsaturated fatty acids mysteroleic and palmitoleic acids in vitro. In Thermus thermophilus (strain ATCC 27634 / DSM 579 / HB8), this protein is Long-chain-fatty-acid--CoA ligase.